A 387-amino-acid chain; its full sequence is Paralemmin-1 (387 aa).

N-acetylmethionine is present on Met1. The stretch at 9-101 (TSQQERLQAI…EKEIEVLERG (93 aa)) forms a coiled coil. Composition is skewed to basic and acidic residues over residues 31–41 (KRRQLEDERRQ) and 69–102 (DLRR…ERGD). The disordered stretch occupies residues 31 to 160 (KRRQLEDERR…VSNTPLRTVD (130 aa)). A compositionally biased stretch (low complexity) spans 104–117 (APATAKENAAAPSP). Phosphoserine occurs at positions 116 and 124. Phosphothreonine occurs at positions 141 and 145. Residue Ser162 is modified to Phosphoserine. Thr243 bears the Phosphothreonine mark. Ser245 is modified (phosphoserine). Disordered regions lie at residues 247-296 (AGST…GQEP) and 335-378 (AEPK…DMKK). Over residues 286–296 (GPPGIQPGQEP) the composition is skewed to low complexity. Ser346 carries the phosphoserine modification. Thr367 is subject to Phosphothreonine. At Ser369 the chain carries Phosphoserine. 2 S-palmitoyl cysteine lipidation sites follow: Cys381 and Cys383. Residue Cys384 is modified to Cysteine methyl ester. Cys384 is lipidated: S-farnesyl cysteine. Positions 385 to 387 (SIM) are cleaved as a propeptide — removed in mature form.

It belongs to the paralemmin family. In terms of assembly, interacts with dopamine receptor DRD3. As to expression, widely expressed with highest expression in brain and testis and intermediate expression in heart and adrenal gland.

It localises to the cell membrane. The protein localises to the cell projection. The protein resides in the filopodium membrane. Its subcellular location is the axon. It is found in the dendrite. It localises to the dendritic spine. The protein localises to the basolateral cell membrane. The protein resides in the apicolateral cell membrane. Involved in plasma membrane dynamics and cell process formation. Isoform 1 and isoform 2 are necessary for axonal and dendritic filopodia induction, for dendritic spine maturation and synapse formation in a palmitoylation-dependent manner. In Homo sapiens (Human), this protein is Paralemmin-1 (PALM).